The following is a 409-amino-acid chain: Imidazolonepropionase (409 aa).

Histidine 70 and histidine 72 together coordinate Fe(3+). Zn(2+) contacts are provided by histidine 70 and histidine 72. Positions 79, 137, and 164 each coordinate 4-imidazolone-5-propanoate. Tyrosine 137 lines the N-formimidoyl-L-glutamate pocket. Histidine 225 is a binding site for Fe(3+). Histidine 225 provides a ligand contact to Zn(2+). Glutamine 228 serves as a coordination point for 4-imidazolone-5-propanoate. The N-formimidoyl-L-glutamate site is built by asparagine 314 and glycine 316. Threonine 317 is a binding site for 4-imidazolone-5-propanoate.

It belongs to the metallo-dependent hydrolases superfamily. HutI family. Zn(2+) is required as a cofactor. Requires Fe(3+) as cofactor.

The protein resides in the cytoplasm. The catalysed reaction is 4-imidazolone-5-propanoate + H2O = N-formimidoyl-L-glutamate. It functions in the pathway amino-acid degradation; L-histidine degradation into L-glutamate; N-formimidoyl-L-glutamate from L-histidine: step 3/3. Its function is as follows. Catalyzes the hydrolytic cleavage of the carbon-nitrogen bond in imidazolone-5-propanoate to yield N-formimidoyl-L-glutamate. It is the third step in the universal histidine degradation pathway. This chain is Imidazolonepropionase, found in Paenarthrobacter aurescens (strain TC1).